We begin with the raw amino-acid sequence, 230 residues long: Ureidoacrylate amidohydrolase RutB (230 aa).

Catalysis depends on Asp-24, which acts as the Proton acceptor. The active site involves Lys-133. Residue Cys-166 is the Nucleophile of the active site.

The protein belongs to the isochorismatase family. RutB subfamily.

It carries out the reaction (Z)-3-ureidoacrylate + H2O + H(+) = (Z)-3-aminoacrylate + NH4(+) + CO2. It catalyses the reaction (Z)-3-ureidoacrylate + H2O = (Z)-3-aminoacrylate + carbamate + H(+). The catalysed reaction is (Z)-2-methylureidoacrylate + H2O + H(+) = (Z)-2-methylaminoacrylate + NH4(+) + CO2. Its function is as follows. Hydrolyzes ureidoacrylate to form aminoacrylate and carbamate. The carbamate hydrolyzes spontaneously, thereby releasing one of the nitrogen atoms of the pyrimidine ring as ammonia and one of its carbon atoms as CO2. In Escherichia coli O103:H2 (strain 12009 / EHEC), this protein is Ureidoacrylate amidohydrolase RutB.